A 1084-amino-acid chain; its full sequence is Transcription elongation factor SPT5 (1084 aa).

Positions 1 to 91 are disordered; that stretch reads MSDSEDSDFS…DDEYEDEDPW (91 aa). Composition is skewed to acidic residues over residues 20–32, 41–62, and 77–91; these read AEEV…EEEQ, AEEE…EEDD, and DEAD…EDPW. Residues 175 to 269 are interaction with SUPT4H1; it reads DPNLWTVKCK…TDVLKVVKEV (95 aa). KOW domains follow at residues 272 to 305, 419 to 450, 471 to 502, and 593 to 626; these read LKPK…ISLK, LQAG…ITIM, FRMG…VILF, and IHVK…LHCK. The interval 312–419 is interaction with RNA polymerase II; it reads LDRIKARMSM…TTGKEREHNL (108 aa). Ser665 is subject to Phosphoserine. Residues 667–700 form a disordered region; it reads RISSPMHPGGGGQPQRGGGGGGGGGMGRGRGRRD. Residues 674–694 are compositionally biased toward gly residues; the sequence is PGGGGQPQRGGGGGGGGGMGR. In terms of domain architecture, KOW 5 spans 702–735; it reads DLIGQTVRISQGPYKGYIGVVKDATESTARVELH. Positions 748-973 are disordered; that stretch reads LTTVGGKERQ…HTPGSNIDQA (226 aa). Residues 758–763 form a CTR1-1; approximate repeat; sequence GRSSTH. The tract at residues 758–815 is 8 X 7 AA approximate tandem repeats of G-S-[QR]-T-P-X-[YQ], motif CTR1; sequence GRSSTHLRTPMYGSQTPIYGTGSRTPMYGSQTPLHDGSRTPHYGSQTPLHDGSRTPGQ. Over residues 759–790 the composition is skewed to polar residues; the sequence is RSSTHLRTPMYGSQTPIYGTGSRTPMYGSQTP. Residues 764–769 form a CTR1-2; approximate repeat; the sequence is LRTPMY. Residues 770-776 form a CTR1-3 repeat; the sequence is GSQTPIY. Residues Thr773 and Thr782 each carry the phosphothreonine; by CDK9 modification. The stretch at 779–785 is one CTR1-4 repeat; it reads GSRTPMY. A CTR1-5 repeat occupies 786-792; it reads GSQTPLH. Residues 794-800 form a CTR1-6 repeat; sequence GSRTPHY. The stretch at 801–807 is one CTR1-7 repeat; the sequence is GSQTPLH. A CTR1-8 repeat occupies 809 to 815; that stretch reads GSRTPGQ. A compositionally biased stretch (acidic residues) spans 832-842; it reads DEYEFAYDDEP. One copy of the CTR2-1 repeat lies at 842–849; that stretch reads PSPSPQGY. The 10 X 8 AA approximate tandem repeats of P-[TS]-P-S-P-[QA]-[SG]-Y, motif CTR2 stretch occupies residues 842 to 948; that stretch reads PSPSPQGYGG…ASPSPSPVGY (107 aa). One copy of the CTR2-2; approximate repeat lies at 852 to 860; that stretch reads TPNPQTPGY. Over residues 855-864 the composition is skewed to pro residues; it reads PQTPGYPEVP. The CTR2-3; approximate repeat unit spans residues 861–867; sequence PEVPSPQ. Positions 866-888 are enriched in polar residues; sequence PQVNPQYNPQTPGTPAMYNTDQY. One copy of the CTR2-4; half-length repeat lies at 879 to 883; the sequence is TPAMY. The stretch at 894–900 is one CTR2-5; approximate repeat; that stretch reads PSPQGSY. Over residues 894-909 the composition is skewed to low complexity; the sequence is PSPQGSYQPSPSPQSY. The stretch at 902 to 909 is one CTR2-6 repeat; the sequence is PSPSPQSY. One copy of the CTR2-7; approximate repeat lies at 914-919; that stretch reads PSPVGY. The stretch at 922–928 is one CTR2-8 repeat; sequence THSPASY. The CTR2-9 repeat unit spans residues 930-937; sequence PTPSPMAY. The stretch at 941–948 is one CTR2-10 repeat; sequence PSPSPVGY.

Belongs to the SPT5 family. In terms of assembly, interacts with SUPT4H1 to form the DSIF complex. DSIF interacts with RNA polymerase II and with the positive transcription elongation factor b complex (P-TEFb complex), which is composed of CDK9 and cyclin-T. In terms of processing, phosphorylated. Phosphorylation by P-TEFb (CDK9) at Thr residues of the C-terminal repeats alleviates transcriptional pausing and promotes transcription elongation.

The protein resides in the nucleus. Functionally, component of the DRB sensitivity-inducing factor complex (DSIF complex), which regulates mRNA processing and transcription elongation by RNA polymerase II. DSIF positively regulates mRNA capping by stimulating the mRNA guanylyltransferase activity of RNGTT/CAP1A. DSIF also acts cooperatively with the negative elongation factor complex (NELF complex) to enhance transcriptional pausing at sites proximal to the promoter. Transcriptional pausing may facilitate the assembly of an elongation competent RNA polymerase II complex. DSIF and NELF promote pausing by inhibition of the transcription elongation factor TFIIS/S-II. TFIIS/S-II binds to RNA polymerase II at transcription pause sites and stimulates the weak intrinsic nuclease activity of the enzyme. Cleavage of blocked transcripts by RNA polymerase II promotes the resumption of transcription from the new 3' terminus and may allow repeated attempts at transcription through natural pause sites. Following phosphorylation by CDK9, DSIF can also positively regulate transcriptional elongation. Regulation of transcriptional elongation by this protein is required for the expression of genes which control neuronal development. In Danio rerio (Zebrafish), this protein is Transcription elongation factor SPT5 (supt5h).